A 118-amino-acid polypeptide reads, in one-letter code: Small ribosomal subunit protein uS13 (118 aa).

Residues 93–118 (RGLPVRGQRTKTNARTRKGPRKPIRK) form a disordered region.

This sequence belongs to the universal ribosomal protein uS13 family. Part of the 30S ribosomal subunit. Forms a loose heterodimer with protein S19. Forms two bridges to the 50S subunit in the 70S ribosome.

Its function is as follows. Located at the top of the head of the 30S subunit, it contacts several helices of the 16S rRNA. In the 70S ribosome it contacts the 23S rRNA (bridge B1a) and protein L5 of the 50S subunit (bridge B1b), connecting the 2 subunits; these bridges are implicated in subunit movement. Contacts the tRNAs in the A and P-sites. The chain is Small ribosomal subunit protein uS13 from Azotobacter vinelandii (strain DJ / ATCC BAA-1303).